A 660-amino-acid polypeptide reads, in one-letter code: uncharacterized protein (660 aa).

The segment at 1-660 (MGTPCQSARG…RNPGCPRTWR (660 aa)) is disordered. The segment covering 67 to 80 (RPGGGNRVGAGRGR) has biased composition (gly residues). A compositionally biased stretch (polar residues) spans 104 to 116 (SNPTGGCSDPQRS). 4 repeat units span residues 149–273 (SARN…GCPR), 274–398 (SARN…GCPR), 399–523 (SARN…GCPR), and 524–648 (SARN…GCPR). Residues 149-648 (SARNPGCPRT…THRRPPGCPR (500 aa)) form a 4 X 125 AA tandem repeats region. Low complexity-rich tracts occupy residues 177–196 (RPSG…GTPA), 302–321 (RPSG…GTPA), 427–446 (RPSG…GTPA), and 552–571 (RPSG…GTPA).

This is an uncharacterized protein from Homo sapiens (Human).